The sequence spans 486 residues: Chromosomal replication initiator protein DnaA (486 aa).

The tract at residues 1–79 (MEKSKNIWSL…GYNNIVIVFT (79 aa)) is domain I, interacts with DnaA modulators. A domain II region spans residues 79-141 (TNQPPKTHSN…EEEPTNFKNP (63 aa)). A domain III, AAA+ region region spans residues 142–358 (FLKKRYTFEN…AAVTKLKAYI (217 aa)). Positions 186, 188, 189, and 190 each coordinate ATP. Residues 359–486 (DLDNIEIDIE…TELMNKIKKN (128 aa)) are domain IV, binds dsDNA.

It belongs to the DnaA family. As to quaternary structure, oligomerizes as a right-handed, spiral filament on DNA at oriC.

It localises to the cytoplasm. Its function is as follows. Plays an essential role in the initiation and regulation of chromosomal replication. ATP-DnaA binds to the origin of replication (oriC) to initiate formation of the DNA replication initiation complex once per cell cycle. Binds the DnaA box (a 9 base pair repeat at the origin) and separates the double-stranded (ds)DNA. Forms a right-handed helical filament on oriC DNA; dsDNA binds to the exterior of the filament while single-stranded (ss)DNA is stabiized in the filament's interior. The ATP-DnaA-oriC complex binds and stabilizes one strand of the AT-rich DNA unwinding element (DUE), permitting loading of DNA polymerase. After initiation quickly degrades to an ADP-DnaA complex that is not apt for DNA replication. Binds acidic phospholipids. Functionally, binds to the bpuR promoter, possibly at 5'-TTTTTAAA-3'. The polypeptide is Chromosomal replication initiator protein DnaA (Borreliella burgdorferi (strain ATCC 35210 / DSM 4680 / CIP 102532 / B31) (Borrelia burgdorferi)).